Here is a 475-residue protein sequence, read N- to C-terminus: Bifunctional purple acid phosphatase 26 (475 aa).

Residues 1–30 (MNHLVIISVFLSSVLLLYRGESGITSSFIR) form the signal peptide. The N-linked (GlcNAc...) asparagine glycan is linked to N103. Positions 162, 189, and 192 each coordinate Fe cation. Residue D189 coordinates Zn(2+). Zn(2+) contacts are provided by N227 and H312. N227 contributes to the substrate binding site. Residue H322 is the Proton donor of the active site. H349 serves as a coordination point for Zn(2+). 349 to 351 (HVH) provides a ligand contact to substrate. H351 serves as a coordination point for Fe cation. N365 and N422 each carry an N-linked (GlcNAc...) asparagine glycan.

This sequence belongs to the metallophosphoesterase superfamily. Purple acid phosphatase family. In terms of assembly, homodimer. It depends on Fe cation as a cofactor. The cofactor is Zn(2+). Post-translationally, glycosylated. In terms of tissue distribution, expressed in roots, stems, leaves, flowers and siliques.

It is found in the vacuole. It catalyses the reaction a phosphate monoester + H2O = an alcohol + phosphate. The catalysed reaction is 2 a phenolic donor + H2O2 = 2 a phenolic radical donor + 2 H2O. Its activity is regulated as follows. Activated by Mg(2+), Co(2+), Mn(2+) and Ba(2+). Inhibited by Fe(2+), Cu(2+), Zn(2+), NaF, molybdate, arsenate, vanadate and inorganic phosphate. No effect of tartrate, Asp, Gln, glutathione, Asn, ascorbic acid and phosphite. Functionally, metallo-phosphoesterase involved in phosphate metabolism. Acid phosphatase activity with phosphoenolpyruvate, inorganic pyrophosphate, phenyl-phosphate and p-nitrophenyl-phosphate as the most effective substrates. No activity with phytic acid, phosphocholine or bis-p-nitrophenyl-phosphate. Has a peroxidase activity at alkaline pH. This Arabidopsis thaliana (Mouse-ear cress) protein is Bifunctional purple acid phosphatase 26 (PAP26).